Consider the following 420-residue polypeptide: ATP phosphoribosyltransferase regulatory subunit (420 aa).

This sequence belongs to the class-II aminoacyl-tRNA synthetase family. HisZ subfamily. Heteromultimer composed of HisG and HisZ subunits.

It localises to the cytoplasm. It functions in the pathway amino-acid biosynthesis; L-histidine biosynthesis; L-histidine from 5-phospho-alpha-D-ribose 1-diphosphate: step 1/9. In terms of biological role, required for the first step of histidine biosynthesis. May allow the feedback regulation of ATP phosphoribosyltransferase activity by histidine. The sequence is that of ATP phosphoribosyltransferase regulatory subunit from Bacillus cereus (strain ZK / E33L).